The following is a 576-amino-acid chain: TOX high mobility group box family member 3 (576 aa).

3 disordered regions span residues 189 to 258 (NLGG…PQKP), 422 to 443 (TMVGSAPSTQVSPSVQTQQHQM), and 519 to 563 (LQHM…QIQS). Positions 204 to 215 (ASKSATPSPSSS) are enriched in low complexity. Residues 223–239 (EANRAIGEKRAAPDSGK) show a composition bias toward basic and acidic residues. The span at 240–250 (KPKTPKKKKKK) shows a compositional bias: basic residues. The HMG box DNA-binding region spans 255–323 (PQKPVSAYAL…EYLKALAAYR (69 aa)). Over residues 428 to 443 (PSTQVSPSVQTQQHQM) the composition is skewed to low complexity. Positions 528–542 (PSPRQHSPVASQITS) are enriched in polar residues. The span at 549–563 (SPQPASQQHQSQIQS) shows a compositional bias: low complexity.

Homodimer. Interacts with CREB1; the interaction is not depolarization dependent. Interacts with CREBBP (via C-terminus). Interacts (via HGM box) with CITED1 (via C-terminus); the interaction increases estrogen-response element (ERE)-dependent transcription and protection against cell death. Interacts with CREB1 (phosphorylated form). As to expression, expressed mainly in epithelial cells. Expressed in the central nervous system (CNS), in the ileum and within the brain in the frontal and occipital lobe.

It is found in the nucleus. Transcriptional coactivator of the p300/CBP-mediated transcription complex. Activates transactivation through cAMP response element (CRE) sites. Protects against cell death by inducing antiapoptotic and repressing pro-apoptotic transcripts. Stimulates transcription from the estrogen-responsive or BCL-2 promoters. Required for depolarization-induced transcription activation of the C-FOS promoter in neurons. Associates with chromatin to the estrogen-responsive C3 promoter region. The protein is TOX high mobility group box family member 3 (TOX3) of Homo sapiens (Human).